Here is a 388-residue protein sequence, read N- to C-terminus: Tryptophan synthase beta chain (388 aa).

N6-(pyridoxal phosphate)lysine is present on lysine 86.

The protein belongs to the TrpB family. Tetramer of two alpha and two beta chains. Pyridoxal 5'-phosphate serves as cofactor.

The enzyme catalyses (1S,2R)-1-C-(indol-3-yl)glycerol 3-phosphate + L-serine = D-glyceraldehyde 3-phosphate + L-tryptophan + H2O. It participates in amino-acid biosynthesis; L-tryptophan biosynthesis; L-tryptophan from chorismate: step 5/5. Its function is as follows. The beta subunit is responsible for the synthesis of L-tryptophan from indole and L-serine. The chain is Tryptophan synthase beta chain (trpB) from Buchnera aphidicola subsp. Acyrthosiphon pisum (strain APS) (Acyrthosiphon pisum symbiotic bacterium).